Consider the following 114-residue polypeptide: Transmembrane protein 256 homolog (114 aa).

A signal peptide spans 1-25; it reads MAAGRVWGRLGAVSGALAVTAGAYG. Over 26 to 64 the chain is Extracellular; that stretch reads AHGFRRSDRDEYLKELFETGNRYHFLHSLALLAVPHCRR. A helical transmembrane segment spans residues 65–85; it reads PLLAGSLLTSGIVLFSGTFYY. At 86 to 93 the chain is on the cytoplasmic side; sequence QALSGDPT. Residues 94–114 traverse the membrane as a helical segment; that stretch reads LTKAAPYGGTLLILGWAAMAL.

The protein belongs to the TMEM256 family.

It is found in the cell membrane. The polypeptide is Transmembrane protein 256 homolog (Bufo gargarizans (Asian toad)).